Consider the following 79-residue polypeptide: Small ribosomal subunit protein bS20 (79 aa).

It belongs to the bacterial ribosomal protein bS20 family.

Binds directly to 16S ribosomal RNA. The sequence is that of Small ribosomal subunit protein bS20 from Karelsulcia muelleri (strain GWSS) (Sulcia muelleri).